The chain runs to 388 residues: Na(+)/H(+) antiporter NhaA (388 aa).

The next 11 membrane-spanning stretches (helical) occupy residues 14 to 34 (GGII…MGAT), 59 to 79 (MLLW…GLEV), 95 to 115 (AFPV…YLAF), 125 to 145 (GWAI…ALLG), 154 to 174 (IFLM…IALF), 179 to 199 (LSIV…LLNL), 219 to 239 (VLKS…FIPL), 254 to 274 (VLHP…NAGV), 292 to 312 (IIAG…WLAL), 328 to 348 (IMAV…IASL), and 360 to 380 (WAKL…YSWL).

Belongs to the NhaA Na(+)/H(+) (TC 2.A.33) antiporter family.

The protein resides in the cell inner membrane. It carries out the reaction Na(+)(in) + 2 H(+)(out) = Na(+)(out) + 2 H(+)(in). Functionally, na(+)/H(+) antiporter that extrudes sodium in exchange for external protons. The sequence is that of Na(+)/H(+) antiporter NhaA from Salmonella paratyphi A (strain ATCC 9150 / SARB42).